The primary structure comprises 258 residues: Ribosomal RNA small subunit methyltransferase J (258 aa).

S-adenosyl-L-methionine-binding positions include 107–108 (RD), 123–124 (ER), 159–160 (SS), and D177.

This sequence belongs to the methyltransferase superfamily. RsmJ family.

It localises to the cytoplasm. The enzyme catalyses guanosine(1516) in 16S rRNA + S-adenosyl-L-methionine = N(2)-methylguanosine(1516) in 16S rRNA + S-adenosyl-L-homocysteine + H(+). Specifically methylates the guanosine in position 1516 of 16S rRNA. The sequence is that of Ribosomal RNA small subunit methyltransferase J from Shewanella sediminis (strain HAW-EB3).